Reading from the N-terminus, the 128-residue chain is MHLPPQAAGPYRSRFSYNTQTQPPEKPRSSAELKPQSPSLITEKRPRPGPKGRNRVAFNYECCNYFIIAVSLLAGSSQYTLVSGPDGPLTRRYAPTSGKPSSGPLRPRTEALSWLKAGMVWQGWGWVR.

Disordered regions lie at residues 1–53 and 85–105; these read MHLP…PKGR and PDGP…SGPL.

This is an uncharacterized protein from Escherichia coli.